The following is a 440-amino-acid chain: Major capsid protein (440 aa).

This sequence belongs to the T4 phage major capsid protein family.

The protein resides in the virion. In terms of biological role, major capsid protein that self-associates to form the icosahedral capsid. This is Major capsid protein from Salmonella typhi.